The following is a 693-amino-acid chain: tRNA (guanine(27)-N(2))-dimethyltransferase (693 aa).

Positions 95–99 match the Nucleolar localization signal motif; that stretch reads HKLRR. Residues 144-166 form a C2H2-type zinc finger; that stretch reads YHCIICSATITRRTDMLGHVRRH. A Trm1 methyltransferase domain is found at 187-648; sequence EILKEADTDV…APLMQFKSIL (462 aa). S-adenosyl-L-methionine contacts are provided by R220, D267, D317, and A318. Residues C448, C451, C473, and C475 each contribute to the Zn(2+) site. Residue K545 forms a Glycyl lysine isopeptide (Lys-Gly) (interchain with G-Cter in SUMO2) linkage. Phosphoserine occurs at positions 572 and 667.

This sequence belongs to the class I-like SAM-binding methyltransferase superfamily. Trm1 family.

The protein resides in the nucleus. Its subcellular location is the nucleolus. The enzyme catalyses guanosine(27) in tRNA(Tyr) + 2 S-adenosyl-L-methionine = N(2)-dimethylguanosine(27) in tRNA(Tyr) + 2 S-adenosyl-L-homocysteine + 2 H(+). Functionally, specifically dimethylates a single guanine residue at position 27 of tRNA(Tyr) using S-adenosyl-L-methionine as donor of the methyl groups. Dimethylation at position 27 of tRNA(Tyr) is required for efficient translation of tyrosine codons. Also required to maintain 3-(3-amino-3-carboxypropyl)uridine (acp3U) in the D-loop of several cytoplasmic tRNAs. This is tRNA (guanine(27)-N(2))-dimethyltransferase (TRMT1L) from Macaca fascicularis (Crab-eating macaque).